Reading from the N-terminus, the 387-residue chain is MRKKILLLGSGELGKEFTIAAQRLGQEIIAVDAYDGAPAQQVAHAREVVSMLDGAALDALVAKHRPDVIVPEIEAIRTERLQAYEAQGVQVVPSARAAAFTMNRRAIRDLAARELGLATARYAYASTPEAFRAAVHEIGLPCVVKPLMSSSGKGQSVVRAEGDLEAAWAYAMSGTRGDLREVIVEEFIPFDSEITLLTVTQRRGETLFCPPIGHRQERGDYQESWQPHPVPPPLLEEARRMAGAVTRALGGAGIFGVEFFLAKDRIWFSELSPRPHDTGMVTLAGTQPLNEFELHLRAVLGLPIPPITLVRPGASAVILARGTGAPVVRGLESALAEPGADVRIFGKPALRPHRRMGVALVSGAPGDDPRALVERARAVAARVSVDP.

N(1)-(5-phospho-beta-D-ribosyl)glycinamide contacts are provided by residues 12–13 (EL) and E72. ATP is bound by residues R104, K145, 150–155 (SSGKGQ), 185–188 (EEFI), and E193. One can recognise an ATP-grasp domain in the interval 109 to 300 (DLAARELGLA…EFELHLRAVL (192 aa)). Positions 258 and 270 each coordinate Mg(2+). N(1)-(5-phospho-beta-D-ribosyl)glycinamide-binding positions include D277, K347, and 354–355 (RR).

This sequence belongs to the PurK/PurT family. In terms of assembly, homodimer.

The catalysed reaction is N(1)-(5-phospho-beta-D-ribosyl)glycinamide + formate + ATP = N(2)-formyl-N(1)-(5-phospho-beta-D-ribosyl)glycinamide + ADP + phosphate + H(+). It functions in the pathway purine metabolism; IMP biosynthesis via de novo pathway; N(2)-formyl-N(1)-(5-phospho-D-ribosyl)glycinamide from N(1)-(5-phospho-D-ribosyl)glycinamide (formate route): step 1/1. Its function is as follows. Involved in the de novo purine biosynthesis. Catalyzes the transfer of formate to 5-phospho-ribosyl-glycinamide (GAR), producing 5-phospho-ribosyl-N-formylglycinamide (FGAR). Formate is provided by PurU via hydrolysis of 10-formyl-tetrahydrofolate. The polypeptide is Formate-dependent phosphoribosylglycinamide formyltransferase (Anaeromyxobacter dehalogenans (strain 2CP-C)).